The primary structure comprises 292 residues: Inhibitory synaptic factor 1 (292 aa).

3 disordered regions span residues 1–25, 122–186, and 198–292; these read MNIR…RERI, SDSV…ERVR, and CDDE…KGKN. The stretch at 23 to 63 forms a coiled coil; sequence ERIRQRMKMVIGQLEDILRELKEVAKELREVVSQIDKLTSD. Residues 198-214 show a composition bias toward acidic residues; it reads CDDEEGDGEEEAAEEEG. Residues 263-285 show a composition bias toward polar residues; it reads RNSSTQTVSDKSTQTVLPYTATR.

Belongs to the INSYN1 family. In terms of assembly, interacts with GPHN.

The protein localises to the postsynaptic density. Component of the protein machinery at the inhibitory synapses, probably acting as a scaffold. Inhibitory synapses dampen neuronal activity through postsynaptic hyperpolarization. This synaptic inhibition is fundamental for the functioning of the central nervous system, shaping and orchestrating the flow of information through neuronal networks to generate a precise neural code. The polypeptide is Inhibitory synaptic factor 1 (Bos taurus (Bovine)).